We begin with the raw amino-acid sequence, 296 residues long: uncharacterized protein (296 aa).

This is an uncharacterized protein from Magallana gigas (Pacific oyster).